A 71-amino-acid polypeptide reads, in one-letter code: Pseudonajatoxin b (71 aa).

Intrachain disulfides connect Cys-3–Cys-21, Cys-14–Cys-42, Cys-27–Cys-31, Cys-46–Cys-58, and Cys-59–Cys-64.

It belongs to the three-finger toxin family. Long-chain subfamily. Type II alpha-neurotoxin sub-subfamily. In terms of tissue distribution, expressed by the venom gland.

The protein localises to the secreted. Binds with high affinity to muscular (alpha-1/CHRNA1) and neuronal (alpha-7/CHRNA7) nicotinic acetylcholine receptor (nAChR) and inhibits acetylcholine from binding to the receptor, thereby impairing neuromuscular and neuronal transmission. This chain is Pseudonajatoxin b, found in Pseudonaja textilis (Eastern brown snake).